The sequence spans 523 residues: Glutamate--cysteine ligase (523 aa).

The protein belongs to the glutamate--cysteine ligase type 1 family. Type 1 subfamily.

The catalysed reaction is L-cysteine + L-glutamate + ATP = gamma-L-glutamyl-L-cysteine + ADP + phosphate + H(+). It participates in sulfur metabolism; glutathione biosynthesis; glutathione from L-cysteine and L-glutamate: step 1/2. This chain is Glutamate--cysteine ligase, found in Shewanella oneidensis (strain ATCC 700550 / JCM 31522 / CIP 106686 / LMG 19005 / NCIMB 14063 / MR-1).